The sequence spans 401 residues: Acetate kinase (401 aa).

Asn7 contacts Mg(2+). Residue Lys14 participates in ATP binding. Arg96 contributes to the substrate binding site. The Proton donor/acceptor role is filled by Asp153. Residues 212–216, 287–289, and 335–339 each bind ATP; these read HLGNG, DMR, and GIGEN. Glu388 contributes to the Mg(2+) binding site.

It belongs to the acetokinase family. As to quaternary structure, homodimer. The cofactor is Mg(2+). It depends on Mn(2+) as a cofactor.

The protein resides in the cytoplasm. The catalysed reaction is acetate + ATP = acetyl phosphate + ADP. Its pathway is metabolic intermediate biosynthesis; acetyl-CoA biosynthesis; acetyl-CoA from acetate: step 1/2. Functionally, catalyzes the formation of acetyl phosphate from acetate and ATP. Can also catalyze the reverse reaction. The polypeptide is Acetate kinase (Microcystis aeruginosa (strain NIES-843 / IAM M-2473)).